The chain runs to 477 residues: Bifunctional protein HldE (477 aa).

Residues 1–319 form a ribokinase region; the sequence is MKITLPPFDQ…RALQEQEQSG (319 aa). 195 to 198 contacts ATP; that stretch reads NLAE. The active site involves Asp-264. Positions 344–477 are cytidylyltransferase; sequence MTNGCFDLLH…IERMQSAPDT (134 aa).

The protein in the N-terminal section; belongs to the carbohydrate kinase PfkB family. This sequence in the C-terminal section; belongs to the cytidylyltransferase family. In terms of assembly, homodimer.

The catalysed reaction is D-glycero-beta-D-manno-heptose 7-phosphate + ATP = D-glycero-beta-D-manno-heptose 1,7-bisphosphate + ADP + H(+). It carries out the reaction D-glycero-beta-D-manno-heptose 1-phosphate + ATP + H(+) = ADP-D-glycero-beta-D-manno-heptose + diphosphate. It participates in nucleotide-sugar biosynthesis; ADP-L-glycero-beta-D-manno-heptose biosynthesis; ADP-L-glycero-beta-D-manno-heptose from D-glycero-beta-D-manno-heptose 7-phosphate: step 1/4. It functions in the pathway nucleotide-sugar biosynthesis; ADP-L-glycero-beta-D-manno-heptose biosynthesis; ADP-L-glycero-beta-D-manno-heptose from D-glycero-beta-D-manno-heptose 7-phosphate: step 3/4. Functionally, catalyzes the phosphorylation of D-glycero-D-manno-heptose 7-phosphate at the C-1 position to selectively form D-glycero-beta-D-manno-heptose-1,7-bisphosphate. Catalyzes the ADP transfer from ATP to D-glycero-beta-D-manno-heptose 1-phosphate, yielding ADP-D-glycero-beta-D-manno-heptose. This is Bifunctional protein HldE from Alkalilimnicola ehrlichii (strain ATCC BAA-1101 / DSM 17681 / MLHE-1).